The chain runs to 418 residues: Serine/threonine transporter SstT (418 aa).

8 helical membrane passes run 21-41, 49-69, 83-103, 142-162, 190-210, 217-237, 299-319, and 331-351; these read ILIG…AAIA, FVGA…IASI, ILFL…VVSF, ALLN…GIAL, FAPL…GFGA, LLVV…PLIV, MAGA…TLGI, and VVAA…LLLI.

The protein belongs to the dicarboxylate/amino acid:cation symporter (DAACS) (TC 2.A.23) family.

The protein localises to the cell inner membrane. The catalysed reaction is L-serine(in) + Na(+)(in) = L-serine(out) + Na(+)(out). The enzyme catalyses L-threonine(in) + Na(+)(in) = L-threonine(out) + Na(+)(out). Functionally, involved in the import of serine and threonine into the cell, with the concomitant import of sodium (symport system). The polypeptide is Serine/threonine transporter SstT (Yersinia pestis bv. Antiqua (strain Antiqua)).